Here is a 43-residue protein sequence, read N- to C-terminus: Large ribosomal subunit protein bL32 (43 aa).

Belongs to the bacterial ribosomal protein bL32 family.

The protein is Large ribosomal subunit protein bL32 (rpmF) of Carsonella ruddii (strain PV).